Consider the following 180-residue polypeptide: Stathmin-3 (180 aa).

Residues cysteine 22 and cysteine 24 are each lipidated (S-palmitoyl cysteine). An SLD domain is found at 38 to 180 (GDMEVKQLDK…NKEQREEMSG (143 aa)). 7 positions are modified to phosphoserine: serine 50, serine 60, serine 65, serine 68, serine 72, serine 73, and serine 81. Residues 59–82 (KSPSDLSPESPMLSSPPKKKDTSL) are disordered. A compositionally biased stretch (low complexity) spans 60–74 (SPSDLSPESPMLSSP). The stretch at 75–179 (PKKKDTSLEE…RNKEQREEMS (105 aa)) forms a coiled coil.

Belongs to the stathmin family. Interacts with STAT3. Interacts with CLU (secreted form); this interaction may act as an important modulator during neuronal differentiation. Post-translationally, N-terminal palmitoylation promotes specific anchoring to the cytosolic leaflet of Golgi membranes and subsequent vesicular trafficking along dendrites and axons. Neuronal Stathmins are substrates for palmitoyltransferases ZDHHC3, ZDHHC7 and ZDHHC15. In terms of tissue distribution, neuron specific.

It is found in the golgi apparatus. Its subcellular location is the cell projection. The protein resides in the growth cone. It localises to the axon. The protein localises to the cytoplasm. It is found in the cytosol. Functionally, exhibits microtubule-destabilizing activity, which is antagonized by STAT3. In Homo sapiens (Human), this protein is Stathmin-3 (STMN3).